The primary structure comprises 120 residues: Sirohydrochlorin cobaltochelatase (120 aa).

The active-site Proton acceptor is His9. Residue His9 participates in Co(2+) binding. Residues Gln43 and 68–73 (FAAGTH) contribute to the substrate site. His73 lines the Co(2+) pocket.

This sequence belongs to the CbiX family. CbiXS subfamily. Homotetramer; dimer of dimers.

It carries out the reaction Co-sirohydrochlorin + 2 H(+) = sirohydrochlorin + Co(2+). The protein operates within cofactor biosynthesis; adenosylcobalamin biosynthesis; cob(II)yrinate a,c-diamide from sirohydrochlorin (anaerobic route): step 1/10. Functionally, catalyzes the insertion of Co(2+) into sirohydrochlorin as part of the anaerobic pathway to cobalamin biosynthesis. The sequence is that of Sirohydrochlorin cobaltochelatase from Sulfurisphaera tokodaii (strain DSM 16993 / JCM 10545 / NBRC 100140 / 7) (Sulfolobus tokodaii).